Consider the following 206-residue polypeptide: Small ribosomal subunit protein uS4 (206 aa).

The S4 RNA-binding domain occupies 96–156 (GRLDNVVYRM…EKAKKQSRVK (61 aa)).

This sequence belongs to the universal ribosomal protein uS4 family. As to quaternary structure, part of the 30S ribosomal subunit. Contacts protein S5. The interaction surface between S4 and S5 is involved in control of translational fidelity.

Functionally, one of the primary rRNA binding proteins, it binds directly to 16S rRNA where it nucleates assembly of the body of the 30S subunit. In terms of biological role, with S5 and S12 plays an important role in translational accuracy. This Pectobacterium atrosepticum (strain SCRI 1043 / ATCC BAA-672) (Erwinia carotovora subsp. atroseptica) protein is Small ribosomal subunit protein uS4.